A 279-amino-acid polypeptide reads, in one-letter code: Energy-coupling factor transporter ATP-binding protein EcfA (279 aa).

The 236-residue stretch at 4-239 folds into the ABC transporter domain; the sequence is VETKDLYFRY…VETIRKANLR (236 aa). Position 37 to 44 (37 to 44) interacts with ATP; it reads GPNGAGKS.

It belongs to the ABC transporter superfamily. Energy-coupling factor EcfA family. As to quaternary structure, forms a stable energy-coupling factor (ECF) transporter complex composed of 2 membrane-embedded substrate-binding proteins (S component), 2 ATP-binding proteins (A component) and 2 transmembrane proteins (T component).

The protein resides in the cell membrane. Functionally, ATP-binding (A) component of a common energy-coupling factor (ECF) ABC-transporter complex. Unlike classic ABC transporters this ECF transporter provides the energy necessary to transport a number of different substrates. The polypeptide is Energy-coupling factor transporter ATP-binding protein EcfA (Methanocaldococcus jannaschii (strain ATCC 43067 / DSM 2661 / JAL-1 / JCM 10045 / NBRC 100440) (Methanococcus jannaschii)).